The sequence spans 482 residues: Pyruvate kinase (482 aa).

Substrate is bound at residue R37. K(+) is bound by residues N39, S41, and D71. Position 39-42 (N39–H42) interacts with ATP. Residues R78 and K160 each contribute to the ATP site. Mg(2+) is bound at residue E222. Residues G245, D246, and T278 each coordinate substrate. A Mg(2+)-binding site is contributed by D246.

This sequence belongs to the pyruvate kinase family. In terms of assembly, homotetramer. It depends on Mg(2+) as a cofactor. K(+) is required as a cofactor.

It catalyses the reaction pyruvate + ATP = phosphoenolpyruvate + ADP + H(+). It functions in the pathway carbohydrate degradation; glycolysis; pyruvate from D-glyceraldehyde 3-phosphate: step 5/5. In Agrobacterium vitis (Rhizobium vitis), this protein is Pyruvate kinase (ttuE).